Consider the following 103-residue polypeptide: Large ribosomal subunit protein bL21 (103 aa).

This sequence belongs to the bacterial ribosomal protein bL21 family. As to quaternary structure, part of the 50S ribosomal subunit. Contacts protein L20.

Functionally, this protein binds to 23S rRNA in the presence of protein L20. The polypeptide is Large ribosomal subunit protein bL21 (Teredinibacter turnerae (strain ATCC 39867 / T7901)).